The chain runs to 215 residues: Pyrrolidone-carboxylate peptidase (215 aa).

Active-site residues include glutamate 81, cysteine 144, and histidine 168.

This sequence belongs to the peptidase C15 family. In terms of assembly, homotetramer.

Its subcellular location is the cytoplasm. It carries out the reaction Release of an N-terminal pyroglutamyl group from a polypeptide, the second amino acid generally not being Pro.. Its function is as follows. Removes 5-oxoproline from various penultimate amino acid residues except L-proline. This chain is Pyrrolidone-carboxylate peptidase (pcp), found in Bacillus subtilis (strain 168).